A 314-amino-acid chain; its full sequence is Target of rapamycin complex subunit wat1 (314 aa).

7 WD repeats span residues 1–35 (MSVQYPPQHSVLLVSSGYDHTIRFWEALSGICSRT), 38–76 (HADSQVNRLCISPDKKFLAAAGNPHVRLYDINTSSQMPL), 81–120 (GHTNNVTAIAFHCDGKWLATSSEDGTVKVWDMRAPSVQRN), 122–161 (DHKSPVNDLLIHPNQGELLSCDQSGRVRAWDLGENSCTHE), 165–204 (EEDVPMSSITVGSDGSMLIAGNNKGNCYVWRMLNHQGASL), 213–252 (AHQRYITRCVLSPDVKHLATCSADATVNIWSTEDMSFMLE), and 257–296 (GHQRWVWDCAFSADSTYLVTASSDHVARLWELSSGETIRQ). Residue S141 is modified to Phosphoserine.

This sequence belongs to the WD repeat LST8 family. As to quaternary structure, the target of rapamycin complex 1 (TORC1) is composed of at least mip1, pop3/wat1, tco89, toc1 and tor2. The target of rapamycin complex 2 (TORC2) is composed of at least bit61, pop3/wat1, sin1, ste20 and tor1. Interacts with prp2.

It is found in the cytoplasm. The protein localises to the nucleus. Functionally, component of both TORC1 and TORC2, which regulate multiple cellular processes to control cell growth in response to environmental signals. Nutrient limitation and environmental stress signals cause inactivation of TORC1. Active TORC1 positively controls cell growth and ribosome biogenesis by regulating ribosomal protein gene expression. TORC1 negatively controls G1 cell-cycle arrest, sexual development and amino acid uptake. Represses mating, meiosis and sporulation efficiency by interfering with the functions of the transcription factor ste11 and the meiosis-promoting RNA-binding protein mei2. TORC2 is required for cell survival under various stress conditions. TORC2 positively controls G1 cell-cycle arrest, sexual development and amino acid uptake. Positively regulates amino acid uptake through the control of expression of amino acid permeases. May play a role in mRNA maturation as a coupling protein between splicing and synthesis and/or stabilization. The chain is Target of rapamycin complex subunit wat1 from Schizosaccharomyces pombe (strain 972 / ATCC 24843) (Fission yeast).